The sequence spans 615 residues: MAEKFAEKTFTDPSRIRNFCIIAHIDHGKSTLADRILQLSNVVDARDMRAQYLDNMDIERERGITIKAQNVRLPWIPRSGEYEGQEIVMQMIDTPGHVDFTYEVSRALEACEGAILLVDAAQGIEAQTLANLYLAMENDLEIIPVLNKIDLPAADPDKYALEIANIVGCEPEDVLRVSGKTGVGVPELLDKVVELIPAPSPGPSEDAPARAMIFDSVYDTYRGVVTYIRVMEGRLTPRQKIKMMSTGATHELLEIGIVSPTPKKCEGLGPGEVGYLITGVKDVRQSKVGDTVTWAHNGAEEPLQGYQEPTPMVYSGLFPVSQADFPDLRDALEKLQLNDASLTYEPETSVALGFGFRCGFLGLLHMEITRDRLEREFDLDLISTAPSVNYRVVDEAGQEHRVHNPSDWPGGKLREIYEPIVKVTIIVPSEFVGPTMELCQAKRGQMGGMDYLSEDRVELRYIMPLGEIIFDFFDMLKSRTKGYASLNYEEAGEQEADLVKVDILLQGEPVDAFSAIVHRDNAQWYGNKMTVKLKSLIPRQQFEVPIQAAVGSRIIARENIRALRKDVLAKCYGGDISRKRKLLEKQKAGKKRMKNIGSVEVPQEAFVAALSTDEG.

The 187-residue stretch at 14–200 (SRIRNFCIIA…KVVELIPAPS (187 aa)) folds into the tr-type G domain. GTP is bound by residues 26-31 (DHGKST) and 147-150 (NKID).

Belongs to the TRAFAC class translation factor GTPase superfamily. Classic translation factor GTPase family. LepA subfamily.

Its subcellular location is the cell membrane. The catalysed reaction is GTP + H2O = GDP + phosphate + H(+). In terms of biological role, required for accurate and efficient protein synthesis under certain stress conditions. May act as a fidelity factor of the translation reaction, by catalyzing a one-codon backward translocation of tRNAs on improperly translocated ribosomes. Back-translocation proceeds from a post-translocation (POST) complex to a pre-translocation (PRE) complex, thus giving elongation factor G a second chance to translocate the tRNAs correctly. Binds to ribosomes in a GTP-dependent manner. In Corynebacterium efficiens (strain DSM 44549 / YS-314 / AJ 12310 / JCM 11189 / NBRC 100395), this protein is Elongation factor 4.